The following is a 291-amino-acid chain: N-acetylmannosamine kinase (291 aa).

ATP-binding positions include 5-12 (AIDIGGTK) and 132-139 (GVGGGVVC). 4 residues coordinate Zn(2+): H156, C166, C168, and C173.

It belongs to the ROK (NagC/XylR) family. NanK subfamily. In terms of assembly, homodimer.

The catalysed reaction is an N-acyl-D-mannosamine + ATP = an N-acyl-D-mannosamine 6-phosphate + ADP + H(+). The protein operates within amino-sugar metabolism; N-acetylneuraminate degradation; D-fructose 6-phosphate from N-acetylneuraminate: step 2/5. Catalyzes the phosphorylation of N-acetylmannosamine (ManNAc) to ManNAc-6-P. This Salmonella paratyphi B (strain ATCC BAA-1250 / SPB7) protein is N-acetylmannosamine kinase.